The chain runs to 95 residues: Protein TusB (95 aa).

Belongs to the DsrH/TusB family. In terms of assembly, heterohexamer, formed by a dimer of trimers. The hexameric TusBCD complex contains 2 copies each of TusB, TusC and TusD. The TusBCD complex interacts with TusE.

Its subcellular location is the cytoplasm. Its function is as follows. Part of a sulfur-relay system required for 2-thiolation of 5-methylaminomethyl-2-thiouridine (mnm(5)s(2)U) at tRNA wobble positions. In Escherichia coli (strain SMS-3-5 / SECEC), this protein is Protein TusB.